The primary structure comprises 120 residues: NADH dehydrogenase [ubiquinone] 1 subunit C2 (120 aa).

The chain crosses the membrane as a helical span at residues 57 to 76 (GLHRQLLFVTSFVFAGYFYL).

This sequence belongs to the complex I NDUFC2 subunit family. In terms of assembly, complex I is composed of 45 different subunits. Interacts with TMEM242.

It is found in the mitochondrion inner membrane. Accessory subunit of the mitochondrial membrane respiratory chain NADH dehydrogenase (Complex I), that is believed not to be involved in catalysis but required for the complex assembly. Complex I functions in the transfer of electrons from NADH to the respiratory chain. The immediate electron acceptor for the enzyme is believed to be ubiquinone. In Mus musculus (Mouse), this protein is NADH dehydrogenase [ubiquinone] 1 subunit C2.